The following is a 409-amino-acid chain: Dual-specificity RNA methyltransferase RlmN (409 aa).

The Proton acceptor role is filled by E121. In terms of domain architecture, Radical SAM core spans 127 to 376 (EEGRGTLCIS…IRTPRGRDIL (250 aa)). Residues C134 and C379 are joined by a disulfide bond. 3 residues coordinate [4Fe-4S] cluster: C141, C145, and C148. S-adenosyl-L-methionine-binding positions include 205-206 (GE), S237, 259-261 (SLH), and N336. The S-methylcysteine intermediate role is filled by C379.

Belongs to the radical SAM superfamily. RlmN family. [4Fe-4S] cluster is required as a cofactor.

Its subcellular location is the cytoplasm. It catalyses the reaction adenosine(2503) in 23S rRNA + 2 reduced [2Fe-2S]-[ferredoxin] + 2 S-adenosyl-L-methionine = 2-methyladenosine(2503) in 23S rRNA + 5'-deoxyadenosine + L-methionine + 2 oxidized [2Fe-2S]-[ferredoxin] + S-adenosyl-L-homocysteine. It carries out the reaction adenosine(37) in tRNA + 2 reduced [2Fe-2S]-[ferredoxin] + 2 S-adenosyl-L-methionine = 2-methyladenosine(37) in tRNA + 5'-deoxyadenosine + L-methionine + 2 oxidized [2Fe-2S]-[ferredoxin] + S-adenosyl-L-homocysteine. Specifically methylates position 2 of adenine 2503 in 23S rRNA and position 2 of adenine 37 in tRNAs. m2A2503 modification seems to play a crucial role in the proofreading step occurring at the peptidyl transferase center and thus would serve to optimize ribosomal fidelity. This is Dual-specificity RNA methyltransferase RlmN from Rhizobium etli (strain ATCC 51251 / DSM 11541 / JCM 21823 / NBRC 15573 / CFN 42).